Here is a 727-residue protein sequence, read N- to C-terminus: BRCA1-A complex subunit RAP80 (727 aa).

The interval methionine 1–glutamate 23 is disordered. The necessary for transcriptional repression stretch occupies residues methionine 1–asparagine 101. A compositionally biased stretch (basic and acidic residues) spans lysine 9 to glutamate 23. Residue lysine 20 forms a Glycyl lysine isopeptide (Lys-Gly) (interchain with G-Cter in SUMO2) linkage. Serine 29 carries the phosphoserine modification. Lysine 31 is covalently cross-linked (Glycyl lysine isopeptide (Lys-Gly) (interchain with G-Cter in SUMO2)). Phosphoserine is present on residues serine 44 and serine 46. The disordered stretch occupies residues aspartate 45–cysteine 70. Threonine 51 bears the Phosphothreonine mark. Residues threonine 60–cysteine 70 are compositionally biased toward basic residues. The LR motif motif lies at threonine 60 to histidine 78. Residues lysine 75 and lysine 90 each participate in a glycyl lysine isopeptide (Lys-Gly) (interchain with G-Cter in SUMO2) cross-link. 2 consecutive UIM domains span residues serine 80–valine 99 and glutamate 104–serine 124. Residues arginine 97 to glutamate 103 form a UIM-linker region. Positions asparagine 100 to serine 200 are necessary for interaction with NR6A1 N-terminus. A disordered region spans residues proline 133–glutamine 206. The residue at position 140 (serine 140) is a Phosphoserine. Over residues alanine 176–asparagine 188 the composition is skewed to basic and acidic residues. A compositionally biased stretch (low complexity) spans serine 195–glutamine 206. A Phosphoserine modification is found at serine 205. A Glycyl lysine isopeptide (Lys-Gly) (interchain with G-Cter in SUMO2) cross-link involves residue lysine 245. The interval threonine 270–glutamine 400 is AIR. Residues proline 326–threonine 427 are disordered. A compositionally biased stretch (basic and acidic residues) spans aspartate 355–serine 364. A Phosphoserine modification is found at serine 379. Glycyl lysine isopeptide (Lys-Gly) (interchain with G-Cter in SUMO2) cross-links involve residues lysine 382 and lysine 387. Residues glutamine 400–serine 508 form a necessary for interaction with NR6A1 C-terminus region. At serine 402 the chain carries Phosphoserine. Lysine 436 is covalently cross-linked (Glycyl lysine isopeptide (Lys-Gly) (interchain with G-Cter in SUMO2)). Serine 474 is modified (phosphoserine). The UBZ4-type zinc-finger motif lies at arginine 510–glutamate 537. Zn(2+)-binding residues include cysteine 513, cysteine 516, histidine 528, and cysteine 532. The interval cysteine 513–cysteine 590 is zinc-finger-like region. Residues lysine 552, lysine 570, lysine 595, and lysine 617 each participate in a glycyl lysine isopeptide (Lys-Gly) (interchain with G-Cter in SUMO2) cross-link. The segment at arginine 607–lysine 654 is disordered. At serine 637 the chain carries Phosphoserine. The segment covering glutamine 641 to lysine 654 has biased composition (basic and acidic residues). Lysine 652 is covalently cross-linked (Glycyl lysine isopeptide (Lys-Gly) (interchain with G-Cter in SUMO2)). Serine 665 and serine 689 each carry phosphoserine. Residue lysine 708 forms a Glycyl lysine isopeptide (Lys-Gly) (interchain with G-Cter in SUMO2) linkage.

Belongs to the RAP80 family. In terms of assembly, component of the ARISC complex, at least composed of UIMC1/RAP80, ABRAXAS1, BRCC3/BRCC36, BABAM2 and BABAM1/NBA1. Component of the BRCA1-A complex, at least composed of the BRCA1, BARD1, UIMC1/RAP80, ABRAXAS1, BRCC3/BRCC36, BABAM2 and BABAM1/NBA1. In the BRCA1-A complex, interacts directly with ABRAXAS1. Interacts with ESR1. Interacts with UBE2I. Interacts with NR6A1. Interacts with TSP57. Interacts with TRAIP. Post-translationally, sumoylated. In terms of processing, phosphorylated upon DNA damage by ATM or ATR.

Its subcellular location is the nucleus. Functionally, ubiquitin-binding protein. Specifically recognizes and binds 'Lys-63'-linked ubiquitin. Plays a central role in the BRCA1-A complex by specifically binding 'Lys-63'-linked ubiquitinated histones H2A and H2AX at DNA lesions sites, leading to target the BRCA1-BARD1 heterodimer to sites of DNA damage at double-strand breaks (DSBs). The BRCA1-A complex also possesses deubiquitinase activity that specifically removes 'Lys-63'-linked ubiquitin on histones H2A and H2AX. Also weakly binds monoubiquitin but with much less affinity than 'Lys-63'-linked ubiquitin. May interact with monoubiquitinated histones H2A and H2B; the relevance of such results is however unclear in vivo. Does not bind Lys-48'-linked ubiquitin. May indirectly act as a transcriptional repressor by inhibiting the interaction of NR6A1 with the corepressor NCOR1. The protein is BRCA1-A complex subunit RAP80 (Uimc1) of Mus musculus (Mouse).